Consider the following 225-residue polypeptide: Cytochrome c oxidase subunit 2 (225 aa).

The Mitochondrial intermembrane portion of the chain corresponds to 1–26; the sequence is MMTWSQMSFSDMNSPIMEQMVFFHDH. The chain crosses the membrane as a helical span at residues 27 to 48; the sequence is SMMIILMITILTIYMITNIMMN. At 49–62 the chain is on the mitochondrial matrix side; it reads NLLSRSMMEGQEIE. A helical membrane pass occupies residues 63 to 82; that stretch reads IIWTIIPAITLIFIAIPSLH. The Mitochondrial intermembrane segment spans residues 83 to 225; it reads LLYLTDETFN…KNFINFINSS (143 aa). Cu cation is bound by residues His-160, Cys-195, Glu-197, Cys-199, His-203, and Met-206. Glu-197 is a Mg(2+) binding site.

The protein belongs to the cytochrome c oxidase subunit 2 family. In terms of assembly, component of the cytochrome c oxidase (complex IV, CIV), a multisubunit enzyme composed of a catalytic core of 3 subunits and several supernumerary subunits. The complex exists as a monomer or a dimer and forms supercomplexes (SCs) in the inner mitochondrial membrane with ubiquinol-cytochrome c oxidoreductase (cytochrome b-c1 complex, complex III, CIII). It depends on Cu cation as a cofactor.

It is found in the mitochondrion inner membrane. The catalysed reaction is 4 Fe(II)-[cytochrome c] + O2 + 8 H(+)(in) = 4 Fe(III)-[cytochrome c] + 2 H2O + 4 H(+)(out). Component of the cytochrome c oxidase, the last enzyme in the mitochondrial electron transport chain which drives oxidative phosphorylation. The respiratory chain contains 3 multisubunit complexes succinate dehydrogenase (complex II, CII), ubiquinol-cytochrome c oxidoreductase (cytochrome b-c1 complex, complex III, CIII) and cytochrome c oxidase (complex IV, CIV), that cooperate to transfer electrons derived from NADH and succinate to molecular oxygen, creating an electrochemical gradient over the inner membrane that drives transmembrane transport and the ATP synthase. Cytochrome c oxidase is the component of the respiratory chain that catalyzes the reduction of oxygen to water. Electrons originating from reduced cytochrome c in the intermembrane space (IMS) are transferred via the dinuclear copper A center (CU(A)) of subunit 2 and heme A of subunit 1 to the active site in subunit 1, a binuclear center (BNC) formed by heme A3 and copper B (CU(B)). The BNC reduces molecular oxygen to 2 water molecules using 4 electrons from cytochrome c in the IMS and 4 protons from the mitochondrial matrix. The protein is Cytochrome c oxidase subunit 2 (COII) of Rhipicephalus sanguineus (Brown dog tick).